The primary structure comprises 154 residues: Myoglobin (154 aa).

Residues 2 to 148 (GLSDGEWQLV…FRNDIAAKYK (147 aa)) form the Globin domain. The residue at position 4 (serine 4) is a Phosphoserine. Histidine 65 lines the nitrite pocket. Residue histidine 65 coordinates O2. Threonine 68 carries the phosphothreonine modification. Histidine 94 provides a ligand contact to heme b.

The protein belongs to the globin family. In terms of assembly, monomeric.

Its subcellular location is the cytoplasm. The protein localises to the sarcoplasm. The enzyme catalyses Fe(III)-heme b-[protein] + nitric oxide + H2O = Fe(II)-heme b-[protein] + nitrite + 2 H(+). The catalysed reaction is H2O2 + AH2 = A + 2 H2O. Its function is as follows. Monomeric heme protein which primary function is to store oxygen and facilitate its diffusion within muscle tissues. Reversibly binds oxygen through a pentacoordinated heme iron and enables its timely and efficient release as needed during periods of heightened demand. Depending on the oxidative conditions of tissues and cells, and in addition to its ability to bind oxygen, it also has a nitrite reductase activity whereby it regulates the production of bioactive nitric oxide. Under stress conditions, like hypoxia and anoxia, it also protects cells against reactive oxygen species thanks to its pseudoperoxidase activity. The polypeptide is Myoglobin (MB) (Sciurus vulgaris (Eurasian red squirrel)).